The sequence spans 40 residues: MTKHPTGIYVGCLVKVIRRRLRMELKESVINYSPFVLQHP.

This Escherichia coli (strain K12) protein is Protein YneP.